Here is a 511-residue protein sequence, read N- to C-terminus: Adenosine deaminase 2 (511 aa).

Residues 1–29 (MLVDGPSERPALCFLLLAVAMSFFGSALS) form the signal peptide. The dimerization stretch occupies residues 30–100 (IDETRAHLLL…HLIERSQVFN (71 aa)). Positions 112 and 114 each coordinate Zn(2+). Asp115 is a binding site for substrate. Residue Asn127 is glycosylated (N-linked (GlcNAc...) asparagine). Positions 127-185 (NVTYRPHCHICFTPRGIMQFRFAHPTPRPSEKCSKWILLEDYRKRVQNVTEFDDSLLRN) are PRB domain. Cys137 and Cys159 are disulfide-bonded. Asn174 and Asn185 each carry an N-linked (GlcNAc...) asparagine glycan. Residues 204–211 (WSKFETIF), His293, and Gly326 each bind substrate. His356 contributes to the Zn(2+) binding site. Glu359 functions as the Proton donor in the catalytic mechanism. Asn378 is a glycosylation site (N-linked (GlcNAc...) asparagine). His384 (proton acceptor) is an active-site residue. Asp441 contributes to the Zn(2+) binding site. Substrate is bound at residue Asp442.

Belongs to the metallo-dependent hydrolases superfamily. Adenosine and AMP deaminases family. ADGF subfamily. Homodimer. Interacts with adenosine receptors. Binds heparin. Zn(2+) is required as a cofactor. In terms of tissue distribution, detected in blood plasma (at protein level). Widely expressed, with most abundant expression in human adult heart, lung, lymphoblasts, and placenta as well as fetal lung, liver, and kidney. In embryo, expressed in the outflow tract and atrium of the developing heart, the VII/VIII cranial nerve ganglion, and the notochord.

The protein resides in the secreted. The catalysed reaction is adenosine + H2O + H(+) = inosine + NH4(+). In terms of biological role, adenosine deaminase that may contribute to the degradation of extracellular adenosine, a signaling molecule that controls a variety of cellular responses. Requires elevated adenosine levels for optimal enzyme activity. Binds to cell surfaces via proteoglycans and may play a role in the regulation of cell proliferation and differentiation, independently of its enzyme activity. This is Adenosine deaminase 2 from Homo sapiens (Human).